The following is a 196-amino-acid chain: Peptide deformylase (196 aa).

Residues C105 and H147 each coordinate Fe cation. E148 is a catalytic residue. H151 is a Fe cation binding site.

The protein belongs to the polypeptide deformylase family. Requires Fe(2+) as cofactor.

It catalyses the reaction N-terminal N-formyl-L-methionyl-[peptide] + H2O = N-terminal L-methionyl-[peptide] + formate. Functionally, removes the formyl group from the N-terminal Met of newly synthesized proteins. Requires at least a dipeptide for an efficient rate of reaction. N-terminal L-methionine is a prerequisite for activity but the enzyme has broad specificity at other positions. The protein is Peptide deformylase of Flavobacterium johnsoniae (strain ATCC 17061 / DSM 2064 / JCM 8514 / BCRC 14874 / CCUG 350202 / NBRC 14942 / NCIMB 11054 / UW101) (Cytophaga johnsonae).